We begin with the raw amino-acid sequence, 409 residues long: NADH-quinone oxidoreductase subunit D 1 (409 aa).

It belongs to the complex I 49 kDa subunit family. As to quaternary structure, NDH-1 is composed of 14 different subunits. Subunits NuoB, C, D, E, F, and G constitute the peripheral sector of the complex.

The protein localises to the cell inner membrane. It catalyses the reaction a quinone + NADH + 5 H(+)(in) = a quinol + NAD(+) + 4 H(+)(out). Functionally, NDH-1 shuttles electrons from NADH, via FMN and iron-sulfur (Fe-S) centers, to quinones in the respiratory chain. The immediate electron acceptor for the enzyme in this species is believed to be ubiquinone. Couples the redox reaction to proton translocation (for every two electrons transferred, four hydrogen ions are translocated across the cytoplasmic membrane), and thus conserves the redox energy in a proton gradient. This is NADH-quinone oxidoreductase subunit D 1 from Solibacter usitatus (strain Ellin6076).